We begin with the raw amino-acid sequence, 602 residues long: Protein SHORT-ROOT 1 (602 aa).

A compositionally biased stretch (low complexity) spans 12–55 (AASEQQQQQQQSASYNSRSTTSSGSRSSSHQTNASYSYYHHSSN). 3 disordered regions span residues 12 to 69 (AASE…YYYG), 101 to 145 (DFSS…TAAG), and 165 to 185 (DFSSPASSSGGGTASSGAVGG). The span at 56–68 (SGGGGGGGGGYYY) shows a compositional bias: gly residues. Low complexity predominate over residues 122-145 (PPASSTPTGTAPTPPLSTSSTAAG). The span at 173–185 (SGGGTASSGAVGG) shows a compositional bias: gly residues. The 419-residue stretch at 183–601 (VGGGGGGRWA…QPLVWASAWR (419 aa)) folds into the GRAS domain. The interval 190-253 (RWASQLLLEC…LTASGPRTLR (64 aa)) is leucine repeat I (LRI). The interval 272–349 (ALRFQELSPW…PHLSITTVVS (78 aa)) is VHIID. The short motif at 311 to 315 (FHILD) is the VHIID element. Residues 365–401 (EIGQRMEKFARLMGVPFRFRAVHHSGDLAELDLDALD) form a leucine repeat II (LRII) region. Residues 411 to 517 (LAVNCVNSLR…ERGAGRAIVD (107 aa)) are PFYRE. An SAW region spans residues 520 to 601 (SCPASESMER…QPLVWASAWR (82 aa)).

Belongs to the GRAS family. In terms of assembly, interacts with SCR1. Interacts with SMOS1. In terms of tissue distribution, expressed in leaves and roots. Detected in the stele, the endodermis and part of the cortex.

Its subcellular location is the nucleus. Its function is as follows. Transcription factor required for the asymmetric cell division involved in radial pattern formation in roots. Essential for both cell division and cell specification. The protein is Protein SHORT-ROOT 1 of Oryza sativa subsp. japonica (Rice).